A 356-amino-acid chain; its full sequence is 3-dehydroquinate synthase (356 aa).

NAD(+) is bound by residues 69–74 (DGEQYK), 103–107 (GVVGD), 127–128 (TT), lysine 140, and lysine 149. Zn(2+) contacts are provided by glutamate 182, histidine 245, and histidine 262.

It belongs to the sugar phosphate cyclases superfamily. Dehydroquinate synthase family. Co(2+) serves as cofactor. It depends on Zn(2+) as a cofactor. NAD(+) is required as a cofactor.

The protein resides in the cytoplasm. The enzyme catalyses 7-phospho-2-dehydro-3-deoxy-D-arabino-heptonate = 3-dehydroquinate + phosphate. It functions in the pathway metabolic intermediate biosynthesis; chorismate biosynthesis; chorismate from D-erythrose 4-phosphate and phosphoenolpyruvate: step 2/7. Its function is as follows. Catalyzes the conversion of 3-deoxy-D-arabino-heptulosonate 7-phosphate (DAHP) to dehydroquinate (DHQ). The protein is 3-dehydroquinate synthase of Pseudoalteromonas translucida (strain TAC 125).